Reading from the N-terminus, the 231-residue chain is 7-cyano-7-deazaguanine synthase (231 aa).

Residue 8 to 18 (FSGGQDSTTCL) participates in ATP binding. Positions 188, 197, 200, and 203 each coordinate Zn(2+).

The protein belongs to the QueC family. Zn(2+) is required as a cofactor.

It catalyses the reaction 7-carboxy-7-deazaguanine + NH4(+) + ATP = 7-cyano-7-deazaguanine + ADP + phosphate + H2O + H(+). It participates in purine metabolism; 7-cyano-7-deazaguanine biosynthesis. Its function is as follows. Catalyzes the ATP-dependent conversion of 7-carboxy-7-deazaguanine (CDG) to 7-cyano-7-deazaguanine (preQ(0)). The protein is 7-cyano-7-deazaguanine synthase of Escherichia coli (strain SE11).